The primary structure comprises 450 residues: Phosphoglucosamine mutase 2 (450 aa).

The active-site Phosphoserine intermediate is the S101. The Mg(2+) site is built by S101, D245, D247, and D249. S101 is subject to Phosphoserine.

This sequence belongs to the phosphohexose mutase family. The cofactor is Mg(2+). Activated by phosphorylation.

The enzyme catalyses alpha-D-glucosamine 1-phosphate = D-glucosamine 6-phosphate. In terms of biological role, catalyzes the conversion of glucosamine-6-phosphate to glucosamine-1-phosphate. The protein is Phosphoglucosamine mutase 2 of Shewanella sp. (strain MR-7).